The primary structure comprises 647 residues: Acetyl-coenzyme A synthetase (647 aa).

Residues 192–195, threonine 310, and asparagine 334 each bind CoA; that span reads RGGR. Residues 386 to 388, 410 to 415, aspartate 499, and arginine 514 each bind ATP; these read GEP and DTWWQT. Serine 522 lines the CoA pocket. Position 525 (arginine 525) interacts with ATP. Mg(2+)-binding residues include valine 536, histidine 538, and valine 541. Arginine 583 is a CoA binding site. Position 608 is an N6-acetyllysine (lysine 608).

It belongs to the ATP-dependent AMP-binding enzyme family. Mg(2+) is required as a cofactor. In terms of processing, acetylated. Deacetylation by the SIR2-homolog deacetylase activates the enzyme.

It carries out the reaction acetate + ATP + CoA = acetyl-CoA + AMP + diphosphate. Its function is as follows. Catalyzes the conversion of acetate into acetyl-CoA (AcCoA), an essential intermediate at the junction of anabolic and catabolic pathways. AcsA undergoes a two-step reaction. In the first half reaction, AcsA combines acetate with ATP to form acetyl-adenylate (AcAMP) intermediate. In the second half reaction, it can then transfer the acetyl group from AcAMP to the sulfhydryl group of CoA, forming the product AcCoA. This chain is Acetyl-coenzyme A synthetase, found in Caulobacter vibrioides (strain ATCC 19089 / CIP 103742 / CB 15) (Caulobacter crescentus).